The sequence spans 327 residues: G protein pathway suppressor 2 (327 aa).

Residues 14–109 adopt a coiled-coil conformation; that stretch reads MARALHRHIM…RRRKEQSDLT (96 aa). Residues 26–65 are disordered; sequence RERKRQEEEEVDKMMEQKMKEEQERRKKKEMEERMSLEET. Residues Lys-45 and Lys-71 each participate in a glycyl lysine isopeptide (Lys-Gly) (interchain with G-Cter in SUMO1) cross-link. The segment at 61–94 is interaction with SUMO; sequence SLEETKEQILKLEEKLLALQEEKHQLFLQLKKVL. Disordered stretches follow at residues 177 to 208 and 253 to 327; these read HGQFQGSPGGAYGTAQPPPHYGPTQPAYSPSQ and QKQM…FYHK. Over residues 253–271 the composition is skewed to polar residues; sequence QKQMEHANQQTGFSDSSSL. Position 312 is an asymmetric dimethylarginine (Arg-312). Residues 317-327 show a composition bias toward polar residues; the sequence is QHSQNPRFYHK. Position 323 is an asymmetric dimethylarginine; alternate (Arg-323). Arg-323 carries the post-translational modification Omega-N-methylarginine; alternate.

As to quaternary structure, component of the N-Cor repressor complex, at least composed of NCOR1, NCOR2, HDAC3, TBL1X, TBL1R, CORO2A and GPS2. Interacts (when sumoylated at Lys-71) with TBL1X; leading to protect GPS2 from degradation by the proteasome. Interacts with UBE2N; leading to inhibit UBE2N/Ubc13 activity. Interacts with TRAF1. Interacts with TRAF2. Interacts with TRAF6. Interacts with PPARG (when in the liganded conformation). Interacts with (sumoylated) NR1H2; interaction with sumoylated NR1H2 and NR5A2 onto hepatic acute phase protein promoters prevents N-Cor corepressor complex dissociation. Interacts with (sumoylated) NR5A2; interaction with sumoylated NR1H2 and NR5A2 onto hepatic acute phase protein promoters prevents N-Cor corepressor complex dissociation. Interacts with NR1H3. Interacts with RFX4. Interacts with ANKRD26. In terms of assembly, (Microbial infection) Interacts (via coiled coil domain) with hepatitis C virus (HCV) NS5A. Sumoylation regulates its subcellular location. Sumoylation at Lys-45 and Lys-71 regulates the shuttling between the cytoplasm and the nucleus. Sumoylation at Lys-71 is required for interaction with TBL1X. Sumoylated at Lys-45 and Lys-71 in mitochondrion. Desumoylation by SENP1 leads to relocation from the mitochondria to the nucleus. In terms of processing, ubiquitinated at the C-terminus by SIAH2; leading to its degradation by the proteasome. Interaction with TBL1X and methylation at Arg-323 protect GPS2 against ubiquitination and degradation. Post-translationally, methylated at Arg-312 and Arg-323 by PRMT6. Methylation at Arg-323 protects from degradation by the proteasome. Widely expressed.

It localises to the nucleus. The protein localises to the mitochondrion. Its subcellular location is the cytoplasm. It is found in the cytosol. In terms of biological role, key regulator of inflammation, lipid metabolism and mitochondrion homeostasis that acts by inhibiting the activity of the ubiquitin-conjugating enzyme UBE2N/Ubc13, thereby inhibiting 'Lys-63'-linked ubiquitination. In the nucleus, can both acts as a corepressor and coactivator of transcription, depending on the context. Acts as a transcription coactivator in adipocytes by promoting the recruitment of PPARG to promoters: acts by inhibiting the activity of the ubiquitin-conjugating enzyme UBE2N/Ubc13, leading to stabilization of KDM4A and subsequent histone H3 'Lys-9' (H3K9) demethylation. Promotes cholesterol efflux by acting as a transcription coactivator. Acts as a regulator of B-cell development by inhibiting UBE2N/Ubc13, thereby restricting the activation of Toll-like receptors (TLRs) and B-cell antigen receptors (BCRs) signaling pathways. Acts as a key mediator of mitochondrial stress response: in response to mitochondrial depolarization, relocates from the mitochondria to the nucleus following desumoylation and specifically promotes expression of nuclear-encoded mitochondrial genes. Promotes transcription of nuclear-encoded mitochondrial genes by inhibiting UBE2N/Ubc13. Can also act as a corepressor as part of the N-Cor repressor complex by repressing active PPARG. Plays an anti-inflammatory role in macrophages and is required for insulin sensitivity by acting as a corepressor. Plays an anti-inflammatory role during the hepatic acute phase response by interacting with sumoylated NR1H2 and NR5A2 proteins, thereby preventing N-Cor corepressor complex dissociation. In the cytosol, also plays a non-transcriptional role by regulating insulin signaling and pro-inflammatory pathways. In the cytoplasm, acts as a negative regulator of inflammation by inhibiting the pro-inflammatory TNF-alpha pathway; acts by repressing UBE2N/Ubc13 activity. In the cytoplasm of adipocytes, restricts the activation of insulin signaling via inhibition of UBE2N/Ubc13-mediated ubiquitination of AKT. Able to suppress G-protein- and mitogen-activated protein kinase-mediated signal transduction. Acts as a tumor-suppressor in liposarcoma. (Microbial infection) Required for efficient replication of hepatitis C virus (HCV) by promoting the interaction between VAPA and HCV virus protein NS5A. In Homo sapiens (Human), this protein is G protein pathway suppressor 2.